The sequence spans 238 residues: UPF0173 metal-dependent hydrolase Helmi_16730 (238 aa).

Belongs to the UPF0173 family.

The chain is UPF0173 metal-dependent hydrolase Helmi_16730 from Heliobacterium modesticaldum (strain ATCC 51547 / Ice1).